Here is a 240-residue protein sequence, read N- to C-terminus: Lactate utilization protein C (240 aa).

The protein belongs to the LutC/YkgG family.

Its function is as follows. Is involved in L-lactate degradation and allows cells to grow with lactate as the sole carbon source. This Geobacillus thermodenitrificans (strain NG80-2) protein is Lactate utilization protein C.